We begin with the raw amino-acid sequence, 275 residues long: MQDTTANQVAANATSSFTEHLQRNRPGLLPYNQPFPAALTGAGSQPLQVPHATTIVSLTYGGGVLMAGDRRATMGNVIASRHIEKVFPADSYSVLGIAGTAGIAIDLTRLFQVELEHYEKIEGTLLSLEGKANRLGAMIRGNLPMAMQGLAVVPLFAGFDLPVGIGRLFSYDVTGGRYEEKEHHAVGSGSVFARGALKKLWRPGLTAEEAVAVAVESLYDAADDDSATGGPDPVRQLWPVVYTVERSGARRIPDHDLASVAGAIIEARTTARREA.

The propeptide at 1–52 (MQDTTANQVAANATSSFTEHLQRNRPGLLPYNQPFPAALTGAGSQPLQVPHA) is removed in mature form; by autocatalysis. Catalysis depends on T53, which acts as the Nucleophile.

The protein belongs to the peptidase T1B family. As to quaternary structure, the 20S proteasome core is composed of 14 alpha and 14 beta subunits that assemble into four stacked heptameric rings, resulting in a barrel-shaped structure. The two inner rings, each composed of seven catalytic beta subunits, are sandwiched by two outer rings, each composed of seven alpha subunits. The catalytic chamber with the active sites is on the inside of the barrel. Has a gated structure, the ends of the cylinder being occluded by the N-termini of the alpha-subunits. Is capped by the proteasome-associated ATPase, ARC.

It localises to the cytoplasm. It carries out the reaction Cleavage of peptide bonds with very broad specificity.. Its pathway is protein degradation; proteasomal Pup-dependent pathway. Its activity is regulated as follows. The formation of the proteasomal ATPase ARC-20S proteasome complex, likely via the docking of the C-termini of ARC into the intersubunit pockets in the alpha-rings, may trigger opening of the gate for substrate entry. Interconversion between the open-gate and close-gate conformations leads to a dynamic regulation of the 20S proteasome proteolysis activity. Functionally, component of the proteasome core, a large protease complex with broad specificity involved in protein degradation. The sequence is that of Proteasome subunit beta from Arthrobacter sp. (strain FB24).